The primary structure comprises 85 residues: Serine protease inhibitor Kazal-type 7 (85 aa).

An N-terminal signal peptide occupies residues 1-19 (MKITGGLLLLCTVVYFCSS). A Kazal-like domain is found at 26-85 (SPKKVDCSIYKKYPVVAIPCPITYLPVCGSDYITYGNECHLCTESLKSNGRVQFLHDGSC). Intrachain disulfides connect Cys32/Cys67, Cys45/Cys64, and Cys53/Cys85.

It is found in the secreted. Functionally, probable serine protease inhibitor. The sequence is that of Serine protease inhibitor Kazal-type 7 (SPINK7) from Homo sapiens (Human).